The chain runs to 296 residues: Large ribosomal subunit protein uL29m (296 aa).

A mitochondrion-targeting transit peptide spans 1-19 (MSITSIRALLRSAVSLART).

This sequence belongs to the universal ribosomal protein uL29 family. As to quaternary structure, component of the mitochondrial large ribosomal subunit. Mature mitochondrial ribosomes consist of a small (37S) and a large (54S) subunit. The 37S subunit contains at least 33 different proteins and 1 molecule of RNA (15S). The 54S subunit contains at least 45 different proteins and 1 molecule of RNA (21S).

It localises to the mitochondrion. The protein is Large ribosomal subunit protein uL29m (MRPL4) of Lodderomyces elongisporus (strain ATCC 11503 / CBS 2605 / JCM 1781 / NBRC 1676 / NRRL YB-4239) (Yeast).